The chain runs to 75 residues: Translation initiation factor IF-1, chloroplastic (75 aa).

Positions 1 to 72 (MKKQNLIHAE…TKGRIIYRLS (72 aa)) constitute an S1-like domain.

It belongs to the IF-1 family. In terms of assembly, component of the 30S ribosomal translation pre-initiation complex which assembles on the 30S ribosome in the order IF-2 and IF-3, IF-1 and N-formylmethionyl-tRNA(fMet); mRNA recruitment can occur at any time during PIC assembly.

Its subcellular location is the plastid. The protein resides in the chloroplast. In terms of biological role, one of the essential components for the initiation of protein synthesis. Stabilizes the binding of IF-2 and IF-3 on the 30S subunit to which N-formylmethionyl-tRNA(fMet) subsequently binds. Helps modulate mRNA selection, yielding the 30S pre-initiation complex (PIC). Upon addition of the 50S ribosomal subunit IF-1, IF-2 and IF-3 are released leaving the mature 70S translation initiation complex. This is Translation initiation factor IF-1, chloroplastic from Pinus koraiensis (Korean pine).